The primary structure comprises 347 residues: sn-glycerol-3-phosphate import ATP-binding protein UgpC 1 (347 aa).

An ABC transporter domain is found at 4–234 (IELIDLKKNY…PETVFVAGFI (231 aa)). 36 to 43 (GPSGCGKS) contributes to the ATP binding site.

It belongs to the ABC transporter superfamily. sn-glycerol-3-phosphate importer (TC 3.A.1.1.3) family. As to quaternary structure, the complex is composed of two ATP-binding proteins (UgpC), two transmembrane proteins (UgpA and UgpE) and a solute-binding protein (UgpB).

It is found in the cell inner membrane. It carries out the reaction sn-glycerol 3-phosphate(out) + ATP + H2O = sn-glycerol 3-phosphate(in) + ADP + phosphate + H(+). Its function is as follows. Part of the ABC transporter complex UgpBAEC involved in sn-glycerol-3-phosphate (G3P) import. Responsible for energy coupling to the transport system. This chain is sn-glycerol-3-phosphate import ATP-binding protein UgpC 1, found in Rhizobium etli (strain ATCC 51251 / DSM 11541 / JCM 21823 / NBRC 15573 / CFN 42).